A 252-amino-acid chain; its full sequence is Small ribosomal subunit protein uS2B (252 aa).

The residue at position 2 (S2) is an N-acetylserine. 2 stretches are compositionally biased toward acidic residues: residues 213-229 (VAEE…EEVK) and 241-252 (EWAEENADNVEW). Residues 213-252 (VAEEAAAAEEGEEEEVKEEVTEGQAEATEWAEENADNVEW) are disordered.

The protein belongs to the universal ribosomal protein uS2 family. In terms of assembly, component of the small ribosomal subunit. Mature ribosomes consist of a small (40S) and a large (60S) subunit. The 40S subunit contains about 33 different proteins and 1 molecule of RNA (18S). The 60S subunit contains about 49 different proteins and 3 molecules of RNA (25S, 5.8S and 5S). Interacts with RPS21.

Its subcellular location is the cytoplasm. In terms of biological role, required for the assembly and/or stability of the 40S ribosomal subunit. Required for the processing of the 20S rRNA-precursor to mature 18S rRNA in a late step of the maturation of 40S ribosomal subunits. The chain is Small ribosomal subunit protein uS2B from Saccharomyces cerevisiae (strain RM11-1a) (Baker's yeast).